A 624-amino-acid polypeptide reads, in one-letter code: DNA mismatch repair protein MutL (624 aa).

The segment at 416 to 436 (LTPSVDQPDTGDGENPVAPEK) is disordered.

This sequence belongs to the DNA mismatch repair MutL/HexB family.

Functionally, this protein is involved in the repair of mismatches in DNA. It is required for dam-dependent methyl-directed DNA mismatch repair. May act as a 'molecular matchmaker', a protein that promotes the formation of a stable complex between two or more DNA-binding proteins in an ATP-dependent manner without itself being part of a final effector complex. This is DNA mismatch repair protein MutL from Chlorobaculum tepidum (strain ATCC 49652 / DSM 12025 / NBRC 103806 / TLS) (Chlorobium tepidum).